Here is a 209-residue protein sequence, read N- to C-terminus: Mitochondrial import inner membrane translocase subunit Tim23 (209 aa).

The next 3 helical transmembrane spans lie at 73 to 93 (FELA…FGAM), 125 to 145 (ALWA…GVII), and 181 to 197 (GLAG…YNNW).

The protein belongs to the Tim17/Tim22/Tim23 family. In terms of assembly, component of the TIM23 complex at least composed of TIMM23, TIMM17 (TIMM17A or TIMM17B) and TIMM50; within this complex, directly interacts with TIMM50. The complex interacts with the TIMM44 component of the PAM complex and with DNAJC15. Upon mitochondrial depolarization, interacts with PINK1; the interaction is required for PINK1 accumulation at the outer mitochondrial membrane, kinase activation by autophosphorylation and PRKN recruitement to mitochondria.

It localises to the mitochondrion inner membrane. Its function is as follows. Essential component of the TIM23 complex, a complex that mediates the translocation of transit peptide-containing proteins across the mitochondrial inner membrane. Has a role in the activation of stress-induced mitophagy by protecting PINK1 from OMA1-mediated degradation and facilitating its accumulation at the outer mitochondrial membrane in response to depolarization. This chain is Mitochondrial import inner membrane translocase subunit Tim23 (Timm23), found in Mus musculus (Mouse).